The sequence spans 197 residues: Lymphotoxin-alpha (197 aa).

An N-terminal signal peptide occupies residues 1 to 26 (MTPPGRLYLPLLLGLLLAPPPPGAQG). A THD domain is found at 55–197 (PAAHLVGDPS…SSVFFGAFAL (143 aa)). Residue N88 is glycosylated (N-linked (GlcNAc...) asparagine). C112 and C148 form a disulfide bridge.

Belongs to the tumor necrosis factor family. As to quaternary structure, homotrimer, and heterotrimer of either two LTB and one LTA subunits or (less prevalent) two LTA and one LTB subunits. Interacts with TNFRSF14.

It is found in the secreted. It localises to the membrane. In terms of biological role, cytokine that in its homotrimeric form binds to TNFRSF1A/TNFR1, TNFRSF1B/TNFBR and TNFRSF14/HVEM. In its heterotrimeric form with LTB binds to TNFRSF3/LTBR. Lymphotoxin is produced by lymphocytes and is cytotoxic for a wide range of tumor cells in vitro and in vivo. The protein is Lymphotoxin-alpha (LTA) of Oryctolagus cuniculus (Rabbit).